We begin with the raw amino-acid sequence, 677 residues long: NADPH--cytochrome P450 reductase (677 aa).

An N-acetylglycine modification is found at G2. Residues G2–S21 are Lumenal-facing. Residues L22–F42 form a helical membrane-spanning segment. Over L43 to S677 the chain is Cytoplasmic. S63 is subject to Phosphoserine. The region spanning I80–W224 is the Flavodoxin-like domain. Residues S86–A91, A138–G141, L173–N182, and D208 each bind FMN. The 243-residue stretch at K279 to P521 folds into the FAD-binding FR-type domain. R298 serves as a coordination point for NADP(+). Residues R424, R454–S457, C472–V474, Y478, and G488–T491 each bind FAD. Residues T535, S596 to R597, K602 to Q606, and D638 contribute to the NADP(+) site. W676 lines the FAD pocket.

It belongs to the NADPH--cytochrome P450 reductase family. In the N-terminal section; belongs to the flavodoxin family. The protein in the C-terminal section; belongs to the flavoprotein pyridine nucleotide cytochrome reductase family. FAD is required as a cofactor. Requires FMN as cofactor.

It is found in the endoplasmic reticulum membrane. It catalyses the reaction 2 oxidized [cytochrome P450] + NADPH = 2 reduced [cytochrome P450] + NADP(+) + H(+). In terms of biological role, this enzyme is required for electron transfer from NADP to cytochrome P450 in microsomes. It can also provide electron transfer to heme oxygenase and cytochrome B5. The sequence is that of NADPH--cytochrome P450 reductase from Homo sapiens (Human).